Reading from the N-terminus, the 381-residue chain is Succinyl-diaminopimelate desuccinylase (381 aa).

Position 69 (His-69) interacts with Zn(2+). The active site involves Asp-71. Asp-103 lines the Zn(2+) pocket. Glu-137 acts as the Proton acceptor in catalysis. Glu-138, Glu-166, and His-355 together coordinate Zn(2+).

Belongs to the peptidase M20A family. DapE subfamily. Homodimer. The cofactor is Zn(2+). It depends on Co(2+) as a cofactor.

It carries out the reaction N-succinyl-(2S,6S)-2,6-diaminopimelate + H2O = (2S,6S)-2,6-diaminopimelate + succinate. Its pathway is amino-acid biosynthesis; L-lysine biosynthesis via DAP pathway; LL-2,6-diaminopimelate from (S)-tetrahydrodipicolinate (succinylase route): step 3/3. Its function is as follows. Catalyzes the hydrolysis of N-succinyl-L,L-diaminopimelic acid (SDAP), forming succinate and LL-2,6-diaminopimelate (DAP), an intermediate involved in the bacterial biosynthesis of lysine and meso-diaminopimelic acid, an essential component of bacterial cell walls. In Rickettsia akari (strain Hartford), this protein is Succinyl-diaminopimelate desuccinylase.